Consider the following 116-residue polypeptide: U16-barytoxin-Tl1d (116 aa).

A signal peptide spans 1–20; it reads MKTIIVFLSLLVLATKFGDA. The propeptide occupies 21–74; it reads NEGVNQEQMKEVIQNEFREDFLNEMAAMSLLQQLEAIESTLLEKEADRNSRQKR. 3 disulfides stabilise this stretch: cysteine 75–cysteine 90, cysteine 82–cysteine 95, and cysteine 89–cysteine 110.

This sequence belongs to the neurotoxin 14 (magi-1) family. 06 (ICK-Trit) subfamily. Expressed by the venom gland.

It localises to the secreted. Ion channel inhibitor. This Trittame loki (Brush-footed trapdoor spider) protein is U16-barytoxin-Tl1d.